Reading from the N-terminus, the 492-residue chain is N-succinylglutamate 5-semialdehyde dehydrogenase (492 aa).

Position 220–225 (220–225) interacts with NAD(+); it reads GSANTG. Residues E243 and C277 contribute to the active site.

This sequence belongs to the aldehyde dehydrogenase family. AstD subfamily.

The enzyme catalyses N-succinyl-L-glutamate 5-semialdehyde + NAD(+) + H2O = N-succinyl-L-glutamate + NADH + 2 H(+). It participates in amino-acid degradation; L-arginine degradation via AST pathway; L-glutamate and succinate from L-arginine: step 4/5. Functionally, catalyzes the NAD-dependent reduction of succinylglutamate semialdehyde into succinylglutamate. This is N-succinylglutamate 5-semialdehyde dehydrogenase from Escherichia fergusonii (strain ATCC 35469 / DSM 13698 / CCUG 18766 / IAM 14443 / JCM 21226 / LMG 7866 / NBRC 102419 / NCTC 12128 / CDC 0568-73).